A 230-amino-acid polypeptide reads, in one-letter code: uncharacterized protein (230 aa).

The 69-residue stretch at 12–80 (KNLSYVLAEK…PRIGTRVMPQ (69 aa)) folds into the HTH gntR-type domain. Residues 40–59 (EIELGEQFGVSRTAVREAVK) constitute a DNA-binding region (H-T-H motif).

This is an uncharacterized protein from Escherichia coli (strain K12).